Reading from the N-terminus, the 181-residue chain is Translationally-controlled tumor protein homolog (181 aa).

In terms of domain architecture, TCTP spans 1 to 181 (MLIFKDAFTD…VKEALVEEKQ (181 aa)).

It belongs to the TCTP family.

The protein resides in the cytoplasm. Functionally, involved in calcium binding and microtubule stabilization. This Wuchereria bancrofti protein is Translationally-controlled tumor protein homolog.